The following is a 40-amino-acid chain: Hemoglobin subunit alpha-2 (40 aa).

The region spanning 1–40 (VGPHLDDYGGEALHRNFEVYPQTKTYFPHFDASAGSNQLK) is the Globin domain.

The protein belongs to the globin family. In terms of assembly, heterotetramer of two alpha chains and two beta chains. In terms of tissue distribution, red blood cells.

Involved in oxygen transport from the lung to the various peripheral tissues. This Saara hardwickii (Indian spiny-tailed lizard) protein is Hemoglobin subunit alpha-2.